A 248-amino-acid chain; its full sequence is Triosephosphate isomerase (248 aa).

Residue T4 is modified to Phosphothreonine. The substrate site is built by N10 and K12. S71 carries the phosphoserine modification. H95 serves as the catalytic Electrophile. E165 functions as the Proton acceptor in the catalytic mechanism. S215 carries the phosphoserine modification. Residue K223 forms a Glycyl lysine isopeptide (Lys-Gly) (interchain with G-Cter in ubiquitin) linkage.

The protein belongs to the triosephosphate isomerase family. In terms of assembly, homodimer.

It carries out the reaction D-glyceraldehyde 3-phosphate = dihydroxyacetone phosphate. It participates in carbohydrate biosynthesis; gluconeogenesis. It functions in the pathway carbohydrate degradation; glycolysis; D-glyceraldehyde 3-phosphate from glycerone phosphate: step 1/1. The protein is Triosephosphate isomerase (TPI1) of Saccharomyces cerevisiae (strain ATCC 204508 / S288c) (Baker's yeast).